A 313-amino-acid polypeptide reads, in one-letter code: WD repeat-containing protein 82-A (313 aa).

WD repeat units lie at residues E19 to T58, G105 to L144, H146 to F184, D192 to T231, N236 to V276, and K280 to D313.

It belongs to the WD repeat SWD2 family. In terms of assembly, component of the SET1/COMPASS complex. Component of the PNUTS-PP1 phosphatase complex.

Its subcellular location is the nucleus. It is found in the chromosome. The protein resides in the cytoplasm. Its function is as follows. Regulatory component of the SET1/COMPASS complex implicated in the tethering of this complex to transcriptional start sites of active genes. Facilitates histone H3 'Lys-4' methylation (H3K4me) via recruitment of the SETD1A or SETD1B to the 'Ser-5' phosphorylated C-terminal domain (CTD) of RNA polymerase II large subunit (POLR2A). Component of the PNUTS-PP1 protein phosphatase complex, a protein phosphatase 1 (PP1) complex that promotes RNA polymerase II transcription pause-release, allowing transcription elongation. The chain is WD repeat-containing protein 82-A (wdr82-a) from Xenopus laevis (African clawed frog).